The chain runs to 358 residues: Phospho-N-acetylmuramoyl-pentapeptide-transferase (358 aa).

Transmembrane regions (helical) follow at residues 25–45, 73–93, 97–117, 134–154, 172–192, 197–217, 233–253, 261–281, 286–306, and 335–355; these read RTIY…PWVI, TMGG…WADL, YVWT…TDDY, MFWQ…VAGM, YLYI…VNLT, GLAI…AYIA, GAGE…GFLW, VFMG…LAVI, MLLV…IFQV, and KIIV…ISTL.

The protein belongs to the glycosyltransferase 4 family. MraY subfamily. Mg(2+) serves as cofactor.

The protein resides in the cell inner membrane. The enzyme catalyses UDP-N-acetyl-alpha-D-muramoyl-L-alanyl-gamma-D-glutamyl-meso-2,6-diaminopimeloyl-D-alanyl-D-alanine + di-trans,octa-cis-undecaprenyl phosphate = di-trans,octa-cis-undecaprenyl diphospho-N-acetyl-alpha-D-muramoyl-L-alanyl-D-glutamyl-meso-2,6-diaminopimeloyl-D-alanyl-D-alanine + UMP. It participates in cell wall biogenesis; peptidoglycan biosynthesis. Functionally, catalyzes the initial step of the lipid cycle reactions in the biosynthesis of the cell wall peptidoglycan: transfers peptidoglycan precursor phospho-MurNAc-pentapeptide from UDP-MurNAc-pentapeptide onto the lipid carrier undecaprenyl phosphate, yielding undecaprenyl-pyrophosphoryl-MurNAc-pentapeptide, known as lipid I. This chain is Phospho-N-acetylmuramoyl-pentapeptide-transferase, found in Geobacter sulfurreducens (strain ATCC 51573 / DSM 12127 / PCA).